A 249-amino-acid polypeptide reads, in one-letter code: 5'-nucleotidase SurE (249 aa).

Residues D9, D10, S40, and N92 each contribute to the a divalent metal cation site.

Belongs to the SurE nucleotidase family. The cofactor is a divalent metal cation.

It is found in the cytoplasm. It carries out the reaction a ribonucleoside 5'-phosphate + H2O = a ribonucleoside + phosphate. In terms of biological role, nucleotidase that shows phosphatase activity on nucleoside 5'-monophosphates. The sequence is that of 5'-nucleotidase SurE from Shewanella sediminis (strain HAW-EB3).